Here is a 414-residue protein sequence, read N- to C-terminus: MTQANLSETLFKPRFKHTETSTLVRRFNRGSQPPMQSALDGKNVPHWYRMINRLMWIWRGIDPREILDVQARIVMSDAERTDDDLYDTVIGYRGGNWIYEWAKQAMDWQQKACQEQDAMRSGRYWLHASTLYNIAAYPHLKGDELAEQAQALANRAYEEAAQRLPGSLREMEFAVPGGSPVTAFLHMPKGDGPFPTVLMCGGLDAMQTDYYTLYERYFAPRGIAMLTLDMPSVGFSSKWKLTQDSSLLHQHVLKALPNVPWVDHTRVAAFGFRFGANVAVRLAYLEAPRLKAVACLGPVVHALLSDPQRQSTVPEMYLDVLASRLGMHDASDEALRVELNRYSLKVQGLLGRRCPTPMLSGFWKNDPFSPEEESRLITTSSSDGKLIEIPFNPVYRNFDRALQEITDWINHRLC.

The protein belongs to the FrsA family.

It catalyses the reaction a carboxylic ester + H2O = an alcohol + a carboxylate + H(+). In terms of biological role, catalyzes the hydrolysis of esters. This chain is Esterase FrsA, found in Salmonella dublin (strain CT_02021853).